The following is a 203-amino-acid chain: Urease accessory protein UreG (203 aa).

Glycine 14–threonine 21 provides a ligand contact to GTP.

It belongs to the SIMIBI class G3E GTPase family. UreG subfamily. In terms of assembly, homodimer. UreD, UreF and UreG form a complex that acts as a GTP-hydrolysis-dependent molecular chaperone, activating the urease apoprotein by helping to assemble the nickel containing metallocenter of UreC. The UreE protein probably delivers the nickel.

It localises to the cytoplasm. Functionally, facilitates the functional incorporation of the urease nickel metallocenter. This process requires GTP hydrolysis, probably effectuated by UreG. This is Urease accessory protein UreG from Sinorhizobium fredii (strain NBRC 101917 / NGR234).